Consider the following 251-residue polypeptide: Triosephosphate isomerase (251 aa).

9 to 11 (NWK) serves as a coordination point for substrate. His95 functions as the Electrophile in the catalytic mechanism. Residue Glu167 is the Proton acceptor of the active site. Substrate is bound by residues Gly173, Ser212, and 233 to 234 (GG).

This sequence belongs to the triosephosphate isomerase family. Homodimer.

The protein localises to the cytoplasm. The catalysed reaction is D-glyceraldehyde 3-phosphate = dihydroxyacetone phosphate. It functions in the pathway carbohydrate biosynthesis; gluconeogenesis. The protein operates within carbohydrate degradation; glycolysis; D-glyceraldehyde 3-phosphate from glycerone phosphate: step 1/1. Involved in the gluconeogenesis. Catalyzes stereospecifically the conversion of dihydroxyacetone phosphate (DHAP) to D-glyceraldehyde-3-phosphate (G3P). The chain is Triosephosphate isomerase from Pseudomonas fluorescens (strain Pf0-1).